The following is a 1370-amino-acid chain: Zinc finger MYM-type protein 3 (1370 aa).

Low complexity-rich tracts occupy residues 1–12 (MDPSDFPSPFDP) and 52–61 (PSSGALDLLD). 2 disordered regions span residues 1–72 (MDPS…DPGV) and 90–301 (PSPP…QRAG). Residues 230–253 (ASEKPPERKRSERVRRAEPPKPEV) show a composition bias toward basic and acidic residues. Residues S263 and S267 each carry the phosphoserine modification. The segment covering 263 to 279 (SDEDSDAMVDDPNDEDF) has biased composition (acidic residues). Glycyl lysine isopeptide (Lys-Gly) (interchain with G-Cter in SUMO2) cross-links involve residues K308, K320, and K328. 9 consecutive MYM-type zinc fingers follow at residues 332–366 (QLFC…TKDS), 378–422 (HEFC…LHEV), 429–464 (HRLC…KTGS), 477–511 (KRFC…FEML), 521–559 (SLFC…PCYY), 567–604 (YQFC…KPEV), 612–646 (FQFC…HEKL), 653–692 (KSFC…GVTE), and 699–733 (WDFC…LETI). The residue at position 464 (S464) is a Phosphoserine. Residues 759 to 794 (NLDTQSGPESLLNSQSPESKPQTPSQTKVENSNTVR) are compositionally biased toward polar residues. The interval 759–830 (NLDTQSGPES…PPPPATPRKN (72 aa)) is disordered. Glycyl lysine isopeptide (Lys-Gly) (interchain with G-Cter in SUMO2) cross-links involve residues K778 and K786. Phosphothreonine is present on T795. Residue K804 forms a Glycyl lysine isopeptide (Lys-Gly) (interchain with G-Cter in SUMO2) linkage. Positions 815-826 (APTPPPPPPPAT) are enriched in pro residues. Phosphothreonine occurs at positions 817 and 826. Residues K847, K861, K920, and K1275 each participate in a glycyl lysine isopeptide (Lys-Gly) (interchain with G-Cter in SUMO2) cross-link.

In terms of assembly, may be a component of a BHC histone deacetylase complex that contains HDAC1, HDAC2, HMG20B/BRAF35, KDM1A, RCOR1/CoREST, PHF21A/BHC80, ZMYM2, ZNF217, ZMYM3, GSE1 and GTF2I. As to expression, most abundant in brain, moderate in muscle and heart, low in other tissues except placenta.

It is found in the nucleus. In terms of biological role, plays a role in the regulation of cell morphology and cytoskeletal organization. This Homo sapiens (Human) protein is Zinc finger MYM-type protein 3 (ZMYM3).